Consider the following 251-residue polypeptide: tRNA pseudouridine synthase A 1 (251 aa).

The active-site Nucleophile is the Asp52. Tyr110 contributes to the substrate binding site.

This sequence belongs to the tRNA pseudouridine synthase TruA family. Homodimer.

The catalysed reaction is uridine(38/39/40) in tRNA = pseudouridine(38/39/40) in tRNA. In terms of biological role, formation of pseudouridine at positions 38, 39 and 40 in the anticodon stem and loop of transfer RNAs. This chain is tRNA pseudouridine synthase A 1, found in Desulfotalea psychrophila (strain LSv54 / DSM 12343).